We begin with the raw amino-acid sequence, 138 residues long: UPF0201 protein PYRAB09730 (138 aa).

It belongs to the UPF0201 family.

In Pyrococcus abyssi (strain GE5 / Orsay), this protein is UPF0201 protein PYRAB09730.